A 517-amino-acid chain; its full sequence is Crotonobetaine/carnitine--CoA ligase (517 aa).

The protein belongs to the ATP-dependent AMP-binding enzyme family.

The enzyme catalyses 4-(trimethylamino)butanoate + ATP + CoA = 4-(trimethylamino)butanoyl-CoA + AMP + diphosphate. It carries out the reaction crotonobetaine + ATP + CoA = crotonobetainyl-CoA + AMP + diphosphate. It catalyses the reaction (R)-carnitine + ATP + CoA = (R)-carnitinyl-CoA + AMP + diphosphate. It functions in the pathway amine and polyamine metabolism; carnitine metabolism. In terms of biological role, catalyzes the transfer of CoA to carnitine, generating the initial carnitinyl-CoA needed for the CaiB reaction cycle. Also has activity toward crotonobetaine and gamma-butyrobetaine. The sequence is that of Crotonobetaine/carnitine--CoA ligase from Escherichia coli O7:K1 (strain IAI39 / ExPEC).